The sequence spans 254 residues: Ribonuclease PH (254 aa).

Phosphate is bound by residues R90 and 128-130 (GTR).

It belongs to the RNase PH family. As to quaternary structure, homohexameric ring arranged as a trimer of dimers.

The enzyme catalyses tRNA(n+1) + phosphate = tRNA(n) + a ribonucleoside 5'-diphosphate. In terms of biological role, phosphorolytic 3'-5' exoribonuclease that plays an important role in tRNA 3'-end maturation. Removes nucleotide residues following the 3'-CCA terminus of tRNAs; can also add nucleotides to the ends of RNA molecules by using nucleoside diphosphates as substrates, but this may not be physiologically important. Probably plays a role in initiation of 16S rRNA degradation (leading to ribosome degradation) during starvation. In Corynebacterium kroppenstedtii (strain DSM 44385 / JCM 11950 / CIP 105744 / CCUG 35717), this protein is Ribonuclease PH.